Here is a 132-residue protein sequence, read N- to C-terminus: Transmembrane protein 170B (132 aa).

Residues 1 to 37 lie on the Extracellular side of the membrane; that stretch reads MKAEGGDHSMINLSVQQVLSLWAHGTVLRNLTEMWYW. The N-linked (GlcNAc...) asparagine glycan is linked to N12. Residues 38-58 form a helical membrane-spanning segment; it reads IFLWALFSSLFVHGAAGVLMF. Over 59–68 the chain is Cytoplasmic; it reads VMLQRHRQGR. Residues 69 to 89 traverse the membrane as a helical segment; the sequence is VISVIAVSIGFLASVTGAMIT. The Extracellular portion of the chain corresponds to 90–104; sequence SAAVAGIYRVAGKNM. Residues 105–125 traverse the membrane as a helical segment; the sequence is APLEALVWGVGQTVLTLIISF. At 126 to 132 the chain is on the cytoplasmic side; sequence SRILATL.

It belongs to the TMEM170 family. As to quaternary structure, interacts with CTNNB1. In terms of tissue distribution, expressed in normal breast tissues. Down-regulated in breast cancer cells (at protein level).

Its subcellular location is the cell membrane. Functionally, negatively regulates the canonical Wnt signaling in breast cancer cells. Exerts an inhibitory effect on breast cancer growth by inhibiting CTNNB1 stabilization and nucleus translocation, which reduces the activity of Wnt targets. The protein is Transmembrane protein 170B (TMEM170B) of Homo sapiens (Human).